The sequence spans 331 residues: Homoserine O-succinyltransferase (331 aa).

The active-site Acyl-thioester intermediate is the C141. Substrate is bound by residues K162 and S190. Residue H233 is the Proton acceptor of the active site. E235 is an active-site residue. A substrate-binding site is contributed by R247.

Belongs to the MetA family.

The protein localises to the cytoplasm. The catalysed reaction is L-homoserine + succinyl-CoA = O-succinyl-L-homoserine + CoA. It functions in the pathway amino-acid biosynthesis; L-methionine biosynthesis via de novo pathway; O-succinyl-L-homoserine from L-homoserine: step 1/1. In terms of biological role, transfers a succinyl group from succinyl-CoA to L-homoserine, forming succinyl-L-homoserine. This Methylorubrum extorquens (strain DSM 6343 / CIP 106787 / DM4) (Methylobacterium extorquens) protein is Homoserine O-succinyltransferase.